Here is a 438-residue protein sequence, read N- to C-terminus: SPbeta prophage-derived uncharacterized protein YopA (438 aa).

Residues 391-411 (LHVLYLGVWYLELLTLGILGY) traverse the membrane as a helical segment.

It localises to the cell membrane. This Bacillus subtilis (strain 168) protein is SPbeta prophage-derived uncharacterized protein YopA (yopA).